We begin with the raw amino-acid sequence, 363 residues long: MKLKLILAVAMLAFSLPSQAERIKDIANVQGVRSNQLIGYGLVVGLPGTGEKTRYTEQTFTTMLKNFGINLPDNFRPKIKNVAVVAVHADMPAFIKPGQELDVTVSSLGEAKSLRGGTLLQTFLKGVDGNVYAIAQGSLVVSGFSADGLDGSKVIQNTPTVGRIPNGAIVERSVATPFSTGDYLTFNLRRSDFSTAQRMADAINDLLGPDMARPLDATSVQVSAPRDVSQRVSFLATLENIEVEPADESAKVIVNSRTGTIVVGQNVKLLPAAVTHGGLTVTIAEATQVSQPNALANGQTTVTSNSTINASESNRRMFMFNPGTTLDELVRAVNLVGAAPSDVLAILEALKVAGALHGELIII.

Residues 1–20 (MKLKLILAVAMLAFSLPSQA) form the signal peptide.

The protein belongs to the FlgI family. In terms of assembly, the basal body constitutes a major portion of the flagellar organelle and consists of four rings (L,P,S, and M) mounted on a central rod.

It is found in the periplasm. Its subcellular location is the bacterial flagellum basal body. Its function is as follows. Assembles around the rod to form the L-ring and probably protects the motor/basal body from shearing forces during rotation. The chain is Flagellar P-ring protein from Shewanella sp. (strain MR-4).